The following is a 390-amino-acid chain: Phosphoglycerate kinase (390 aa).

Residues 19–21, arginine 34, 57–60, arginine 115, and arginine 148 each bind substrate; these read DYN and HLGR. ATP contacts are provided by residues lysine 198, glycine 289, glutamate 320, and 347-350; that span reads GGDS.

This sequence belongs to the phosphoglycerate kinase family. Monomer.

It is found in the cytoplasm. The enzyme catalyses (2R)-3-phosphoglycerate + ATP = (2R)-3-phospho-glyceroyl phosphate + ADP. Its pathway is carbohydrate degradation; glycolysis; pyruvate from D-glyceraldehyde 3-phosphate: step 2/5. In Thermus thermophilus (strain ATCC BAA-163 / DSM 7039 / HB27), this protein is Phosphoglycerate kinase.